A 128-amino-acid chain; its full sequence is Sulfurtransferase TusD (128 aa).

Catalysis depends on cysteine 78, which acts as the Cysteine persulfide intermediate.

It belongs to the DsrE/TusD family. In terms of assembly, heterohexamer, formed by a dimer of trimers. The hexameric TusBCD complex contains 2 copies each of TusB, TusC and TusD. The TusBCD complex interacts with TusE.

It localises to the cytoplasm. Part of a sulfur-relay system required for 2-thiolation of 5-methylaminomethyl-2-thiouridine (mnm(5)s(2)U) at tRNA wobble positions. Accepts sulfur from TusA and transfers it in turn to TusE. The protein is Sulfurtransferase TusD of Salmonella typhi.